A 504-amino-acid chain; its full sequence is ATP-dependent RNA helicase DBP3 (504 aa).

Residues 1-14 (MSKDELKDKKRKVE) show a composition bias toward basic and acidic residues. Positions 1–65 (MSKDELKDKK…KSETESFAAS (65 aa)) are disordered. The span at 20–53 (SKKKLKKDKKDKKDKKDKKDKKDKKEKKEKKEKK) shows a compositional bias: basic residues. The Q motif signature appears at 94–120 (LDFSQVSFIDQIQKEISKFPKPTPIQA). A Helicase ATP-binding domain is found at 123 to 296 (WPYLLAGKDV…SSFMSEPVKV (174 aa)). Residue 136 to 143 (AETGSGKT) coordinates ATP. A DEAD box motif is present at residues 243 to 246 (DEAD). The region spanning 325 to 474 (KLLELLKKYH…PVPEELKKFG (150 aa)) is the Helicase C-terminal domain.

It belongs to the DEAD box helicase family. DDX5/DBP2 subfamily.

Its subcellular location is the nucleus. The protein localises to the nucleolus. It catalyses the reaction ATP + H2O = ADP + phosphate + H(+). Its function is as follows. ATP-dependent RNA helicase required for 60S ribosomal subunit synthesis. Involved in efficient pre-rRNA processing, predominantly at site A3, which is necessary for the normal formation of 25S and 5.8S rRNAs. This Kluyveromyces lactis (strain ATCC 8585 / CBS 2359 / DSM 70799 / NBRC 1267 / NRRL Y-1140 / WM37) (Yeast) protein is ATP-dependent RNA helicase DBP3 (DBP3).